A 466-amino-acid chain; its full sequence is ATP synthase subunit beta (466 aa).

Residue 156–163 (GGAGVGKT) participates in ATP binding.

The protein belongs to the ATPase alpha/beta chains family. In terms of assembly, F-type ATPases have 2 components, CF(1) - the catalytic core - and CF(0) - the membrane proton channel. CF(1) has five subunits: alpha(3), beta(3), gamma(1), delta(1), epsilon(1). CF(0) has three main subunits: a(1), b(2) and c(9-12). The alpha and beta chains form an alternating ring which encloses part of the gamma chain. CF(1) is attached to CF(0) by a central stalk formed by the gamma and epsilon chains, while a peripheral stalk is formed by the delta and b chains.

It is found in the cell inner membrane. It catalyses the reaction ATP + H2O + 4 H(+)(in) = ADP + phosphate + 5 H(+)(out). Functionally, produces ATP from ADP in the presence of a proton gradient across the membrane. The catalytic sites are hosted primarily by the beta subunits. This is ATP synthase subunit beta from Dechloromonas aromatica (strain RCB).